The following is a 197-amino-acid chain: Dephospho-CoA kinase (197 aa).

Residues 2–197 enclose the DPCK domain; that stretch reads IIGITGGIAS…SALLSLANPR (196 aa). ATP is bound at residue 10-15; that stretch reads ASGKST.

Belongs to the CoaE family.

It is found in the cytoplasm. The enzyme catalyses 3'-dephospho-CoA + ATP = ADP + CoA + H(+). It functions in the pathway cofactor biosynthesis; coenzyme A biosynthesis; CoA from (R)-pantothenate: step 5/5. In terms of biological role, catalyzes the phosphorylation of the 3'-hydroxyl group of dephosphocoenzyme A to form coenzyme A. The chain is Dephospho-CoA kinase from Streptococcus pyogenes serotype M3 (strain ATCC BAA-595 / MGAS315).